A 348-amino-acid chain; its full sequence is D-alanine--D-alanine ligase (348 aa).

Positions 132-334 (KRVLESIGIP…YPDLIEELVT (203 aa)) constitute an ATP-grasp domain. An ATP-binding site is contributed by 162-217 (LARLTFPIFVKPANMGSSVGISKAQTKVELRKAIQLALTYDSRVLIEQGVVAREIE). Mg(2+)-binding residues include D288, E301, and N303.

This sequence belongs to the D-alanine--D-alanine ligase family. Mg(2+) serves as cofactor. The cofactor is Mn(2+).

Its subcellular location is the cytoplasm. The enzyme catalyses 2 D-alanine + ATP = D-alanyl-D-alanine + ADP + phosphate + H(+). The protein operates within cell wall biogenesis; peptidoglycan biosynthesis. Cell wall formation. The protein is D-alanine--D-alanine ligase of Streptococcus pyogenes serotype M18 (strain MGAS8232).